The chain runs to 346 residues: Zinc finger CCCH domain-containing protein 28 (346 aa).

Residues 1-99 (MASAETPNPD…SPRYPDGKRR (99 aa)) form a disordered region. Low complexity predominate over residues 17–41 (DAAAAADPAAAAPAAAATDPAAAGS). Positions 62–86 (RSSRSRSRSPRRGRSRSRSRSRSRG) are enriched in basic residues. 6 consecutive C3H1-type zinc fingers follow at residues 103–131 (DLNV…HPHP), 138–165 (DSKV…HPPP), 181–209 (KVKM…HHSP), 211–237 (EDCA…HVMA), 282–308 (NYGV…HPDL), and 314–340 (NTQV…HPPA).

This Oryza sativa subsp. japonica (Rice) protein is Zinc finger CCCH domain-containing protein 28.